The following is a 263-amino-acid chain: Sulfur carrier protein FdhD (263 aa).

Cysteine 107 acts as the Cysteine persulfide intermediate in catalysis.

It belongs to the FdhD family.

Its subcellular location is the cytoplasm. Required for formate dehydrogenase (FDH) activity. Acts as a sulfur carrier protein that transfers sulfur from IscS to the molybdenum cofactor prior to its insertion into FDH. This chain is Sulfur carrier protein FdhD, found in Geobacillus kaustophilus (strain HTA426).